Consider the following 709-residue polypeptide: MDKLELVNDGLNIIDFIQKNQKEIQKTYGRSSIQQPSIKDQTKAWEDFLQCTSGESEQVEGGMSKDDGDVERRNLEDLSSTSPTDGTIGKRVSNTRDWAEGSDDIQLDPVVTDVVYHDHGGECTGYGFTSSPERGWSDYTSGANNGNVCLVSDAKMLSYAPEIAVSKEDRETDLVHLENKLSTTGLNPTAVPFTLRNLSDPAKDSPVIAEHYYGLGVKEQNVGPQTSRNVNLDSIKLYTSDDEEADQLEFEDEFAGSSSEVIVGISPEDEEPSSVGGKPNESIGRTIEGQSIRDNLQAKDNKSTDVPGAGPKDSAVKEEPPQKRLPMLAEEFECSGSEDPIIRELLKENSLINCQQGKDAQPPYHWSIERSISPDKTEIVNGAVQTADRQRPGTPMPKSRGIPIKKGTDAKYPSAGTENVPGSKSGATRHVRGSPPYQEGKSVNAENVQLNASTAVKETDKSEVNPVDDNDSLDDKYIMPSDDFSNTFFPHDTDRLNYHADHLGDYDLETLCEESVLMGVINSIKLINLDMRLNHIEEQVKEIPKIINKLESIDRVLAKTNTALSTIEGHLVSMMIMIPGKGKGERKGKNNPELKPVIGRDILEQQSLFSFDNVKNFRDGSLTNEPYGAAVQLREDLILPELNFEETNASQFVPMADDSSRDVIKTLIRTHIKDRELRSELIGYLNKAENDEEIQEIANTVNDIIDGNI.

The interval 1–35 (MDKLELVNDGLNIIDFIQKNQKEIQKTYGRSSIQQ) is N0 binding. The disordered stretch occupies residues 53–92 (SGESEQVEGGMSKDDGDVERRNLEDLSSTSPTDGTIGKRV). The segment covering 63-76 (MSKDDGDVERRNLE) has biased composition (basic and acidic residues). Positions 110 to 140 (VVTDVVYHDHGGECTGYGFTSSPERGWSDYT) are interaction with host STAT1. At S257 the chain carries Phosphoserine; by host. The tract at residues 265–324 (ISPEDEEPSSVGGKPNESIGRTIEGQSIRDNLQAKDNKSTDVPGAGPKDSAVKEEPPQKR) is disordered. Position 350 is a phosphoserine; by host (S350). The tract at residues 384-473 (VQTADRQRPG…VNPVDDNDSL (90 aa)) is disordered. Polar residues-rich tracts occupy residues 416-426 (GTENVPGSKSG) and 444-456 (NAEN…STAV). The multimerization stretch occupies residues 475-580 (DKYIMPSDDF…LVSMMIMIPG (106 aa)).

Homotetramer. Interacts (via multimerization domain) with polymerase L; this interaction forms the polymerase L-P complex. Interacts (via N-terminus) with N0 (via Ncore); this interaction allows P to chaperon N0 to avoid N polymerization before encapsidation. Interacts (via C-terminus) with N-RNA template (via C-terminus); this interaction positions the polymerase on the template for both transcription and replication. Interacts with host STAT1.

Its subcellular location is the virion. It localises to the host cytoplasm. In terms of biological role, essential cofactor of the RNA polymerase L that plays a central role in the transcription and replication by forming the polymerase complex with RNA polymerase L and recruiting L to the genomic N-RNA template for RNA synthesis. Also plays a central role in the encapsidation of nascent RNA chains by forming the encapsidation complex with the nucleocapsid protein N (N-P complex). Acts as a chaperone for newly synthesized free N protein, so-called N0, allowing encapsidation of nascent RNA chains during replication. The nucleoprotein protein N prevents excessive phosphorylation of P, which leads to down-regulation of viral transcription/ replication. Participates, together with N, in the formation of viral factories (viroplasms), which are large inclusions in the host cytoplasm where replication takes place. This Nipah virus protein is Phosphoprotein (P/V/C).